The chain runs to 424 residues: UPF0229 protein Avin_46880 (424 aa).

The interval 57–108 is disordered; the sequence is RDIDEPVLHHGRGGKQTIVHPGNKEFTAGERIPRPSGGGGGGSGSGKASNSG. Positions 92–101 are enriched in gly residues; the sequence is SGGGGGGSGS.

Belongs to the UPF0229 family.

This chain is UPF0229 protein Avin_46880, found in Azotobacter vinelandii (strain DJ / ATCC BAA-1303).